The following is a 403-amino-acid chain: Tyrosine--tRNA ligase (403 aa).

Residues 42 to 51 carry the 'HIGH' region motif; sequence PTAPDLHLGH. A 'KMSKS' region motif is present at residues 226–230; sequence KMSKS. Lys229 provides a ligand contact to ATP. The S4 RNA-binding domain occupies 339-400; sequence LRLAGLLTAA…GKRNFARVSL (62 aa).

It belongs to the class-I aminoacyl-tRNA synthetase family. TyrS type 2 subfamily. In terms of assembly, homodimer.

It is found in the cytoplasm. It carries out the reaction tRNA(Tyr) + L-tyrosine + ATP = L-tyrosyl-tRNA(Tyr) + AMP + diphosphate + H(+). Its function is as follows. Catalyzes the attachment of tyrosine to tRNA(Tyr) in a two-step reaction: tyrosine is first activated by ATP to form Tyr-AMP and then transferred to the acceptor end of tRNA(Tyr). This chain is Tyrosine--tRNA ligase, found in Xanthomonas axonopodis pv. citri (strain 306).